A 281-amino-acid polypeptide reads, in one-letter code: Release factor glutamine methyltransferase (281 aa).

Residues Glu-141 and Asn-185 each coordinate S-adenosyl-L-methionine. 185-188 (NPPY) is a binding site for substrate.

It belongs to the protein N5-glutamine methyltransferase family. PrmC subfamily.

The enzyme catalyses L-glutaminyl-[peptide chain release factor] + S-adenosyl-L-methionine = N(5)-methyl-L-glutaminyl-[peptide chain release factor] + S-adenosyl-L-homocysteine + H(+). Its function is as follows. Methylates the class 1 translation termination release factors RF1/PrfA and RF2/PrfB on the glutamine residue of the universally conserved GGQ motif. This Mycolicibacterium smegmatis (strain ATCC 700084 / mc(2)155) (Mycobacterium smegmatis) protein is Release factor glutamine methyltransferase.